We begin with the raw amino-acid sequence, 86 residues long: Small ribosomal subunit protein bS20 (86 aa).

Positions 1 to 23 (MANIKSSKKDSIKSRKKKKLNAS) are disordered.

The protein belongs to the bacterial ribosomal protein bS20 family.

In terms of biological role, binds directly to 16S ribosomal RNA. This is Small ribosomal subunit protein bS20 from Buchnera aphidicola subsp. Baizongia pistaciae (strain Bp).